The sequence spans 1138 residues: Pesticidal crystal protein Cry7Ab (1138 aa).

It belongs to the delta endotoxin family.

Its function is as follows. Promotes colloidosmotic lysis by binding to the midgut epithelial cells of Coleoptera. This chain is Pesticidal crystal protein Cry7Ab (cry7Ab), found in Bacillus thuringiensis subsp. dakota.